A 2080-amino-acid chain; its full sequence is Dedicator of cytokinesis protein 6 (2080 aa).

Positions 20–31 (EVRKQVSRERSG) are enriched in basic and acidic residues. Disordered stretches follow at residues 20–44 (EVRK…SSLG), 156–189 (QDTP…SGAS), and 408–441 (PQDR…GDDA). A compositionally biased stretch (low complexity) spans 32–42 (SPHSSRRSSSS). Ser178 is subject to Phosphoserine. Basic and acidic residues predominate over residues 408 to 425 (PQDRDSDSEGERRPTWAE). The C2 DOCK-type domain occupies 546 to 712 (RNLLFVYPHS…GVFSVELTAV (167 aa)). Residue Arg863 is modified to Omega-N-methylarginine. Ser870, Ser878, and Ser882 each carry phosphoserine. The interval 1101 to 1123 (ASPSPSVSSTTSQSSTFSSQAPD) is disordered. Over residues 1104–1122 (SPSVSSTTSQSSTFSSQAP) the composition is skewed to low complexity. Position 1341 is a phosphoserine (Ser1341). A DOCKER domain is found at 1620 to 2056 (RGYQGSPDLR…LQPLLTQRLP (437 aa)). The residue at position 2064 (Thr2064) is a Phosphothreonine. 2 positions are modified to phosphoserine: Ser2065 and Ser2069.

Belongs to the DOCK family. In terms of tissue distribution, widely expressed with highest levels in lung and heart.

The protein localises to the cytoplasm. It is found in the perinuclear region. Functionally, acts as a guanine nucleotide exchange factor (GEF) for CDC42 and RAC1 small GTPases. Through its activation of CDC42 and RAC1, regulates neurite outgrowth in an vitro differentiation system. The polypeptide is Dedicator of cytokinesis protein 6 (Dock6) (Mus musculus (Mouse)).